The primary structure comprises 595 residues: MFS-type efflux pump MFS2 (595 aa).

A glycan (N-linked (GlcNAc...) asparagine) is linked at Asn62. 12 helical membrane-spanning segments follow: residues 69–89 (WSIT…SSAY), 106–126 (VITL…LIWA), 136–156 (LLFF…AGSP), 166–186 (FFAG…IADM), 197–217 (GIFA…GGFL), 225–245 (WVEG…SIFL), 301–321 (PIVL…YMLF), 336–356 (PGIG…AMVI), 381–401 (LPVA…FAWT), 409–429 (IVSI…FLSL), 442–462 (ASVL…FPLF), and 478–498 (IPAF…IYGA).

Belongs to the major facilitator superfamily. DHA1 family. Polyamines/proton antiporter (TC 2.A.1.2.16) subfamily.

The protein localises to the cell membrane. Its function is as follows. MFS-type efflux pump involved in the modulation susceptibility to fluconazole and voriconazole, 2 azoles with similar molecular structure. The polypeptide is MFS-type efflux pump MFS2 (Trichophyton rubrum (strain ATCC MYA-4607 / CBS 118892) (Athlete's foot fungus)).